Here is a 159-residue protein sequence, read N- to C-terminus: Large ribosomal subunit protein uL10 (159 aa).

It belongs to the universal ribosomal protein uL10 family. Part of the ribosomal stalk of the 50S ribosomal subunit. The N-terminus interacts with L11 and the large rRNA to form the base of the stalk. The C-terminus forms an elongated spine to which L12 dimers bind in a sequential fashion forming a multimeric L10(L12)X complex.

Forms part of the ribosomal stalk, playing a central role in the interaction of the ribosome with GTP-bound translation factors. The chain is Large ribosomal subunit protein uL10 from Sulfurimonas denitrificans (strain ATCC 33889 / DSM 1251) (Thiomicrospira denitrificans (strain ATCC 33889 / DSM 1251)).